Here is a 198-residue protein sequence, read N- to C-terminus: Endonuclease V (198 aa).

The Mg(2+) site is built by Asp-38 and Asp-101.

It belongs to the endonuclease V family. It depends on Mg(2+) as a cofactor.

The protein localises to the cytoplasm. It carries out the reaction Endonucleolytic cleavage at apurinic or apyrimidinic sites to products with a 5'-phosphate.. DNA repair enzyme involved in the repair of deaminated bases. Selectively cleaves double-stranded DNA at the second phosphodiester bond 3' to a deoxyinosine leaving behind the intact lesion on the nicked DNA. This Saccharolobus islandicus (strain M.14.25 / Kamchatka #1) (Sulfolobus islandicus) protein is Endonuclease V.